The sequence spans 101 residues: uncharacterized protein (101 aa).

Functionally, may regulate the expression of phage structural components with protein P13. This is an uncharacterized protein from Pseudoalteromonas phage PM2 (Bacteriophage PM2).